Consider the following 474-residue polypeptide: Mitochondrial import inner membrane translocase subunit TIM44-1 (474 aa).

Residues 1–54 constitute a mitochondrion transit peptide; the sequence is MAIRKIIRDLLITKQPLLRQLFHQRVLRANARSEFLPAIGYTSHRRFSVFTEFS. The stretch at 68 to 88 forms a coiled coil; it reads ERTVKELKERTEEFKGVTEDL. Residues 132 to 143 show a composition bias toward basic and acidic residues; that stretch reads VKESFKLGKEEN. Residues 132–165 are disordered; that stretch reads VKESFKLGKEENAESASSSGTRASQGEKQQSGST. Over residues 145–165 the composition is skewed to polar residues; the sequence is ESASSSGTRASQGEKQQSGST.

Belongs to the Tim44 family. Probable component of the PAM complex at least composed of a mitochondrial HSP70 protein, TIMM44 and TIMM14. The complex interacts with the TIMM23 component of the TIM17:23 complex. In terms of tissue distribution, expressed in roots, flowers, young cotyledons and leaves.

The protein resides in the mitochondrion inner membrane. Essential component of the PAM complex, a complex required for the translocation of transit peptide-containing proteins from the inner membrane into the mitochondrial matrix in an ATP-dependent manner. Recruits mitochondrial HSP70 to drive protein translocation into the matrix using ATP as an energy source. The chain is Mitochondrial import inner membrane translocase subunit TIM44-1 (TIM44-1) from Arabidopsis thaliana (Mouse-ear cress).